The primary structure comprises 273 residues: Phosphatidylglycerol--prolipoprotein diacylglyceryl transferase (273 aa).

Helical transmembrane passes span 18–38 (IPVR…YVVG), 47–67 (LPED…IICA), 89–109 (IWNG…TAYI), and 116–136 (VSFL…QIIG). Arginine 137 is an a 1,2-diacyl-sn-glycero-3-phospho-(1'-sn-glycerol) binding site. A run of 3 helical transmembrane segments spans residues 178 to 198 (VHPT…ILLI), 207 to 227 (GEIF…IEGM), and 238 to 258 (LRSA…AIIY).

It belongs to the Lgt family.

The protein localises to the cell membrane. The catalysed reaction is L-cysteinyl-[prolipoprotein] + a 1,2-diacyl-sn-glycero-3-phospho-(1'-sn-glycerol) = an S-1,2-diacyl-sn-glyceryl-L-cysteinyl-[prolipoprotein] + sn-glycerol 1-phosphate + H(+). It participates in protein modification; lipoprotein biosynthesis (diacylglyceryl transfer). Functionally, catalyzes the transfer of the diacylglyceryl group from phosphatidylglycerol to the sulfhydryl group of the N-terminal cysteine of a prolipoprotein, the first step in the formation of mature lipoproteins. In Lysinibacillus sphaericus (strain C3-41), this protein is Phosphatidylglycerol--prolipoprotein diacylglyceryl transferase.